A 164-amino-acid chain; its full sequence is UPF0304 protein YfbU (164 aa).

This sequence belongs to the UPF0304 family.

The protein is UPF0304 protein YfbU of Shigella flexneri.